The primary structure comprises 1003 residues: Phosphoenolpyruvate carboxylase (1003 aa).

Positions 1-24 (MIMTVSDPGGSSMSSSSAITPESE) are disordered. Catalysis depends on residues His190 and Lys646.

Belongs to the PEPCase type 1 family. The cofactor is Mg(2+).

The catalysed reaction is oxaloacetate + phosphate = phosphoenolpyruvate + hydrogencarbonate. Forms oxaloacetate, a four-carbon dicarboxylic acid source for the tricarboxylic acid cycle. The chain is Phosphoenolpyruvate carboxylase from Synechococcus sp. (strain WH7803).